A 382-amino-acid polypeptide reads, in one-letter code: Gap junction alpha-1 protein (382 aa).

Over 2-23 (GDWSALGKLLDKVQAYSTAGGK) the chain is Cytoplasmic. Ser-5 is modified (phosphoserine). The chain crosses the membrane as a helical span at residues 24-44 (VWLSVLFIFRILLLGTAVESA). Residues 45–76 (WGDEQSAFRCNTQQPGCENVCYDKSFPISHVR) are Extracellular-facing. Intrachain disulfides connect Cys-54–Cys-192 and Cys-187–Cys-198. The helical transmembrane segment at 77–97 (FWVLQIIFVSVPTLLYLAHVF) threads the bilayer. At 98–155 (YVMRKEEKLNKKEEELKVAQTDGVNVEMHLKQIEIKKFKYGIEEHGKVKMRGGLLRTY) the chain is on the cytoplasmic side. Lys-144 participates in a covalent cross-link: Glycyl lysine isopeptide (Lys-Gly) (interchain with G-Cter in SUMO). Residues 156–176 (IISILFKSIFEVAFLLIQWYI) form a helical membrane-spanning segment. Residues 177–207 (YGFSLSAVYTCKRDPCPHQVDCFLSRPTEKT) are Extracellular-facing. Residues 208 to 228 (IFIIFMLVVSLVSLALNIIEL) traverse the membrane as a helical segment. The Cytoplasmic portion of the chain corresponds to 229 to 382 (FYVFFKGVKD…SRPRPDDLEI (154 aa)). A Glycyl lysine isopeptide (Lys-Gly) (interchain with G-Cter in SUMO) cross-link involves residue Lys-237. An interaction with NOV region spans residues 244-382 (SDPYHTTSGA…SRPRPDDLEI (139 aa)). Tyr-247 carries the post-translational modification Phosphotyrosine. 2 positions are modified to phosphoserine: Ser-255 and Ser-262. Residues 264–382 (KYAYFNGCSS…SRPRPDDLEI (119 aa)) are interaction with UBQLN4. Cys-271 is modified (S-nitrosocysteine). The residue at position 275 (Thr-275) is a Phosphothreonine. Phosphoserine is present on residues Ser-306 and Ser-314. Residues 317–332 (QNRMGQAGSTISNSHA) show a composition bias toward polar residues. The disordered stretch occupies residues 317-382 (QNRMGQAGST…SRPRPDDLEI (66 aa)). At Ser-325 the chain carries Phosphoserine; by CK1. At Thr-326 the chain carries Phosphothreonine. A phosphoserine; by CK1 mark is found at Ser-328 and Ser-330. 2 positions are modified to phosphoserine: Ser-344 and Ser-365. Positions 362-374 (RPSSRASSRASSR) are enriched in low complexity. Phosphoserine; by PKC/PRKCG and PKC/PRKCD is present on Ser-368. Ser-369 and Ser-373 each carry phosphoserine.

The protein belongs to the connexin family. Alpha-type (group II) subfamily. As to quaternary structure, a connexon is composed of a hexamer of connexins. Interacts with SGSM3. Interacts with RIC1/CIP150. Interacts with CNST and CSNK1D. Interacts (via C-terminus) with TJP1. Interacts (via C-terminus) with SRC (via SH3 domain). Interacts (not ubiquitinated) with UBQLN4 (via UBA domain). Interacts with NOV. Interacts with TMEM65. Interacts with ANK3/ANKG and PKP2. In terms of processing, phosphorylation at Ser-325, Ser-328 and Ser-330 by CK1 modulates gap junction assembly. Phosphorylated at Ser-368 by PRKCG; phosphorylation induces disassembly of gap junction plaques and inhibition of gap junction activity. Phosphorylation at Ser-368 by PRKCD triggers its internalization into small vesicles leading to proteasome-mediated degradation. Sumoylated with SUMO1, SUMO2 and SUMO3, which may regulate the level of functional Cx43 gap junctions at the plasma membrane. May be desumoylated by SENP1 or SENP2. Post-translationally, S-nitrosylation at Cys-271 is enriched at the muscle endothelial gap junction in arteries, it augments channel permeability and may regulate of smooth muscle cell to endothelial cell communication. In terms of processing, acetylated in the developing cortex; leading to delocalization from the cell membrane.

Its subcellular location is the cell membrane. The protein localises to the cell junction. The protein resides in the gap junction. It is found in the endoplasmic reticulum. Its function is as follows. Gap junction protein that acts as a regulator of bladder capacity. A gap junction consists of a cluster of closely packed pairs of transmembrane channels, the connexons, through which materials of low MW diffuse from one cell to a neighboring cell. May play a critical role in the physiology of hearing by participating in the recycling of potassium to the cochlear endolymph. Negative regulator of bladder functional capacity: acts by enhancing intercellular electrical and chemical transmission, thus sensitizing bladder muscles to cholinergic neural stimuli and causing them to contract. May play a role in cell growth inhibition through the regulation of NOV expression and localization. Plays an essential role in gap junction communication in the ventricles. The sequence is that of Gap junction alpha-1 protein (GJA1) from Chlorocebus aethiops (Green monkey).